A 611-amino-acid chain; its full sequence is Angiotensin-converting enzyme (611 aa).

A signal peptide spans 1-17 (MKLLVVTILAGLAVCHG). Residues 19–607 (TKEEIVATEY…VESLCHQRYK (589 aa)) form the Peptidase M2 domain. Asn53 carries an N-linked (GlcNAc...) asparagine glycan. Cys133 and Cys141 are disulfide-bonded. Asn196 carries an N-linked (GlcNAc...) asparagine glycan. Cysteines 336 and 354 form a disulfide. Zn(2+) is bound at residue His367. Catalysis depends on Glu368, which acts as the Proton acceptor. 2 residues coordinate Zn(2+): His371 and Glu395. Residue His497 is the Proton donor of the active site. Cys522 and Cys540 form a disulfide bridge. N-linked (GlcNAc...) asparagine glycosylation is present at Asn531.

It belongs to the peptidase M2 family. Requires Zn(2+) as cofactor. Expressed in the compound ganglion and in the posterior region of the midgut.

It is found in the secreted. The protein resides in the extracellular space. It carries out the reaction Release of a C-terminal dipeptide, oligopeptide-|-Xaa-Yaa, when Xaa is not Pro, and Yaa is neither Asp nor Glu. Thus, conversion of angiotensin I to angiotensin II, with increase in vasoconstrictor activity, but no action on angiotensin II.. In terms of biological role, involved in the specific maturation or degradation of a number of bioactive peptides. This Haematobia irritans exigua (Buffalo fly) protein is Angiotensin-converting enzyme (ACE).